Here is a 236-residue protein sequence, read N- to C-terminus: 7-cyano-7-deazaguanine synthase (236 aa).

Residue 12-22 participates in ATP binding; that stretch reads FSGGQDSTTCL. The Zn(2+) site is built by Cys-200, Cys-215, Cys-218, and Cys-221.

The protein belongs to the QueC family. The cofactor is Zn(2+).

It catalyses the reaction 7-carboxy-7-deazaguanine + NH4(+) + ATP = 7-cyano-7-deazaguanine + ADP + phosphate + H2O + H(+). The protein operates within purine metabolism; 7-cyano-7-deazaguanine biosynthesis. Its function is as follows. Catalyzes the ATP-dependent conversion of 7-carboxy-7-deazaguanine (CDG) to 7-cyano-7-deazaguanine (preQ(0)). This Bradyrhizobium sp. (strain ORS 278) protein is 7-cyano-7-deazaguanine synthase.